The sequence spans 93 residues: UPF0358 protein LMHCC_1561 (93 aa).

The protein belongs to the UPF0358 family.

This is UPF0358 protein LMHCC_1561 from Listeria monocytogenes serotype 4a (strain HCC23).